Here is a 327-residue protein sequence, read N- to C-terminus: Thiamine-binding periplasmic protein (327 aa).

The signal sequence occupies residues 1–18 (MLKKCLPLLLLCTAPVFA). Residues 59 to 60 (DG), 161 to 162 (ST), Trp-197, and 215 to 218 (YTTS) contribute to the thiamine site.

The protein belongs to the bacterial solute-binding protein 1 family. In terms of assembly, monomer in solution. The complex is composed of two ATP-binding proteins (ThiQ), two transmembrane proteins (ThiP) and a solute-binding protein (ThiB).

Its subcellular location is the periplasm. Transport is inhibited by the sulfhydryl-specific modifier N-ethylmaleimide. In terms of biological role, part of the ABC transporter complex ThiBPQ involved in thiamine import. Binds thiamine, thiamine phosphate and thiamine diphosphate with high affinity. The protein is Thiamine-binding periplasmic protein (thiB) of Escherichia coli (strain K12).